The following is a 317-amino-acid chain: Tumor-associated calcium signal transducer 2 (317 aa).

The first 24 residues, 1-24, serve as a signal peptide directing secretion; that stretch reads MARGLDLAPLLLLLLAMVAGFCTA. The Extracellular segment spans residues 25–270; the sequence is QINCTCPTNK…QFSMKRLTTG (246 aa). N-linked (GlcNAc...) asparagine glycosylation occurs at Asn-27. One can recognise a Thyroglobulin type-1 domain in the interval 64 to 139; that stretch reads TSKCLLLKAR…TDKGDQSLRC (76 aa). 3 disulfide bridges follow: Cys-67–Cys-102, Cys-113–Cys-119, and Cys-121–Cys-139. Asn-114 carries N-linked (GlcNAc...) asparagine glycosylation. Residues Asn-162 and Asn-202 are each glycosylated (N-linked (GlcNAc...) asparagine). The chain crosses the membrane as a helical span at residues 271 to 291; the sequence is LIAVIAVVAVALVAGVVVLVV. Residues 292–317 are Cytoplasmic-facing; that stretch reads TNRRKSGKYKKVELKELGEMRSEPSL.

This sequence belongs to the EPCAM family.

It is found in the membrane. Functionally, may function as a growth factor receptor. The polypeptide is Tumor-associated calcium signal transducer 2 (Tacstd2) (Rattus norvegicus (Rat)).